We begin with the raw amino-acid sequence, 430 residues long: Endo-beta-1,4-glucanase celB (430 aa).

The first 16 residues, 1–16 (MALLLSLSLLATTISA), serve as a signal peptide directing secretion. Residues Asn-43 and Asn-153 are each glycosylated (N-linked (GlcNAc...) asparagine). Glu-216 functions as the Nucleophile in the catalytic mechanism. The Proton donor role is filled by Glu-221. An N-linked (GlcNAc...) asparagine glycan is attached at Asn-395.

The protein belongs to the glycosyl hydrolase 7 (cellulase C) family.

It localises to the secreted. It catalyses the reaction Endohydrolysis of (1-&gt;4)-beta-D-glucosidic linkages in cellulose, lichenin and cereal beta-D-glucans.. Its function is as follows. Has endoglucanase activity on substrates containing beta-1,4 glycosidic bonds, like in carboxymethylcellulose (CMC), hydroxyethylcellulose (HEC) and beta-glucan. Involved in the degradation of complex natural cellulosic substrates. The polypeptide is Endo-beta-1,4-glucanase celB (celB) (Emericella nidulans (strain FGSC A4 / ATCC 38163 / CBS 112.46 / NRRL 194 / M139) (Aspergillus nidulans)).